Here is a 132-residue protein sequence, read N- to C-terminus: CLAVATA3/ESR (CLE)-related protein 2-B (132 aa).

The N-terminal stretch at 1–26 (MASRMGMVAILSLFVCALVASTSVNA) is a signal peptide. Positions 68–132 (NRASKQLDRE…IGPPPFLDRY (65 aa)) are disordered. Hydroxyproline is present on residues P82 and P85. O-linked (Ara...) hydroxyproline glycosylation is present at P85.

It belongs to the CLV3/ESR signal peptide family. The O-glycosylation (arabinosylation) of the hydroxyproline Pro-85 enhances binding affinity of the ESR2Bp peptide for its receptor. As to expression, seed endosperm.

Its subcellular location is the secreted. It is found in the extracellular space. Functionally, extracellular signal peptide that regulates cell fate. The chain is CLAVATA3/ESR (CLE)-related protein 2-B from Zea mays (Maize).